The sequence spans 237 residues: Insulin-like growth factor-binding protein 4 (237 aa).

Positions 2–82 (EAIHCPPCSE…VHGQGVCMEL (81 aa)) constitute an IGFBP N-terminal domain. 6 cysteine pairs are disulfide-bonded: Cys-6-Cys-32, Cys-9-Cys-34, Cys-17-Cys-35, Cys-23-Cys-38, Cys-46-Cys-59, and Cys-53-Cys-79. N-linked (GlcNAc...) asparagine glycosylation is present at Asn-104. 4 disulfides stabilise this stretch: Cys-110/Cys-117, Cys-153/Cys-183, Cys-194/Cys-205, and Cys-207/Cys-228. One can recognise a Thyroglobulin type-1 domain in the interval 150-228 (QGSCQSELHR…GLEPKGELDC (79 aa)). Position 234 is a phosphoserine (Ser-234).

In terms of assembly, binds IGF2 more than IGF1. There are two different molecular mass variants (29 kDa and 24 kDa forms). The 29 kDa form was shown to be N-glycosylated. As to expression, detected in adult ewe, liver &gt; kidney &gt; lung &gt;&gt; heart and also in several fetal tissues.

It localises to the secreted. In terms of biological role, IGF-binding proteins prolong the half-life of the IGFs and have been shown to either inhibit or stimulate the growth promoting effects of the IGFs on cell culture. They alter the interaction of IGFs with their cell surface receptors. The sequence is that of Insulin-like growth factor-binding protein 4 (IGFBP4) from Ovis aries (Sheep).